Here is a 290-residue protein sequence, read N- to C-terminus: Bifunctional protein FolD (290 aa).

Residues 165–167 (GRS), Ser190, and Ile231 contribute to the NADP(+) site.

This sequence belongs to the tetrahydrofolate dehydrogenase/cyclohydrolase family. In terms of assembly, homodimer.

The enzyme catalyses (6R)-5,10-methylene-5,6,7,8-tetrahydrofolate + NADP(+) = (6R)-5,10-methenyltetrahydrofolate + NADPH. The catalysed reaction is (6R)-5,10-methenyltetrahydrofolate + H2O = (6R)-10-formyltetrahydrofolate + H(+). It participates in one-carbon metabolism; tetrahydrofolate interconversion. Catalyzes the oxidation of 5,10-methylenetetrahydrofolate to 5,10-methenyltetrahydrofolate and then the hydrolysis of 5,10-methenyltetrahydrofolate to 10-formyltetrahydrofolate. The chain is Bifunctional protein FolD from Aromatoleum aromaticum (strain DSM 19018 / LMG 30748 / EbN1) (Azoarcus sp. (strain EbN1)).